We begin with the raw amino-acid sequence, 470 residues long: Putative ankyrin repeat protein L279 (470 aa).

ANK repeat units lie at residues 119-148 (RDDY…NPGT), 149-178 (NKYA…GSDK), 372-401 (ETQG…NVNE), and 403-431 (NGKP…DISL).

This Acanthamoeba polyphaga (Amoeba) protein is Putative ankyrin repeat protein L279.